Here is a 197-residue protein sequence, read N- to C-terminus: Recombination protein RecR (197 aa).

The C4-type zinc finger occupies 57–72 (CSICFAITEDDPCAIC). One can recognise a Toprim domain in the interval 79–174 (GTICVVENSQ…RISRLAHGIP (96 aa)).

This sequence belongs to the RecR family.

May play a role in DNA repair. It seems to be involved in an RecBC-independent recombinational process of DNA repair. It may act with RecF and RecO. The sequence is that of Recombination protein RecR from Pelobacter propionicus (strain DSM 2379 / NBRC 103807 / OttBd1).